The following is a 227-amino-acid chain: Ribosomal RNA large subunit methyltransferase E (227 aa).

G78, W80, D103, D119, and D143 together coordinate S-adenosyl-L-methionine. K183 acts as the Proton acceptor in catalysis.

This sequence belongs to the class I-like SAM-binding methyltransferase superfamily. RNA methyltransferase RlmE family.

The protein localises to the cytoplasm. It catalyses the reaction uridine(2552) in 23S rRNA + S-adenosyl-L-methionine = 2'-O-methyluridine(2552) in 23S rRNA + S-adenosyl-L-homocysteine + H(+). Its function is as follows. Specifically methylates the uridine in position 2552 of 23S rRNA at the 2'-O position of the ribose in the fully assembled 50S ribosomal subunit. This chain is Ribosomal RNA large subunit methyltransferase E, found in Rickettsia peacockii (strain Rustic).